Here is a 275-residue protein sequence, read N- to C-terminus: Large ribosomal subunit protein uL2 (275 aa).

Disordered stretches follow at residues 28 to 59 (KPYA…GGHK) and 224 to 275 (AMNP…RHKR). Residues 35-46 (DTQSSTAGRNNN) are compositionally biased toward polar residues. Residues 50 to 59 (TTRHKGGGHK) are compositionally biased toward basic residues.

Belongs to the universal ribosomal protein uL2 family. In terms of assembly, part of the 50S ribosomal subunit. Forms a bridge to the 30S subunit in the 70S ribosome.

Functionally, one of the primary rRNA binding proteins. Required for association of the 30S and 50S subunits to form the 70S ribosome, for tRNA binding and peptide bond formation. It has been suggested to have peptidyltransferase activity; this is somewhat controversial. Makes several contacts with the 16S rRNA in the 70S ribosome. The sequence is that of Large ribosomal subunit protein uL2 from Paraburkholderia phymatum (strain DSM 17167 / CIP 108236 / LMG 21445 / STM815) (Burkholderia phymatum).